A 1294-amino-acid chain; its full sequence is ATPase PglY (1294 aa).

The segment at 1205 to 1263 (TQAAATPPPAPAASQPTAGDLSLDTPTSDPRIPYTSQETPTSSGGAGTARTSGGRRTTA) is disordered. Residues 1228 to 1244 (DTPTSDPRIPYTSQETP) show a composition bias toward polar residues. The span at 1252–1263 (TARTSGGRRTTA) shows a compositional bias: low complexity.

Its function is as follows. BREX systems (bacteriophage exclusion) provide immunity against bacteriophage. Part of a type 2 BREX system. Previously called the phage growth limitation (Pgl) system, it confers protection against bacteriophage phiC31. The bacteria allows one cycle of phage infection, but subsequent cycles are impaired, protecting the original bacterial colony. The system undergoes high rates (10(-3) to 10(-4)) of phase reversion, i.e. loss and regain of phiC31 resistance. When the pglW-pglX-pglY-pglZ genes are transformed into a susceptible S.lividans (strain 1326) they confer resistance to infection by phage phiC31 and phiBT1; all 4 genes are necessary. Hydrolyzes ATP but not AMP, ADP, GMP, GDP or GTP; activity is inhibited by the non-hydrolyzable ATP analog 5-adenylyl beta,gamma-imidodiphosphate. This Streptomyces coelicolor (strain ATCC BAA-471 / A3(2) / M145) protein is ATPase PglY.